A 78-amino-acid chain; its full sequence is Sec-independent protein translocase protein TatA (78 aa).

The chain crosses the membrane as a helical span at residues methionine 1 to glycine 21. A compositionally biased stretch (basic and acidic residues) spans methionine 43–proline 55. The interval methionine 43–isoleucine 78 is disordered.

The protein belongs to the TatA/E family. The Tat system comprises two distinct complexes: a TatABC complex, containing multiple copies of TatA, TatB and TatC subunits, and a separate TatA complex, containing only TatA subunits. Substrates initially bind to the TatABC complex, which probably triggers association of the separate TatA complex to form the active translocon.

The protein localises to the cell inner membrane. Functionally, part of the twin-arginine translocation (Tat) system that transports large folded proteins containing a characteristic twin-arginine motif in their signal peptide across membranes. TatA could form the protein-conducting channel of the Tat system. The protein is Sec-independent protein translocase protein TatA of Nitrobacter winogradskyi (strain ATCC 25391 / DSM 10237 / CIP 104748 / NCIMB 11846 / Nb-255).